A 354-amino-acid polypeptide reads, in one-letter code: Dye-decolorizing peroxidase (354 aa).

The active-site Proton acceptor is the aspartate 165. Histidine 238 lines the heme pocket. The targeting peptide stretch occupies residues 312–335 (GLFFSPTVDFLDDPPPLPAPGTPA). Positions 324 to 337 (DPPPLPAPGTPAAP) are enriched in pro residues. Positions 324-354 (DPPPLPAPGTPAAPPARNGSLSIGSLKGTTR) are disordered. Residues 342 to 354 (GSLSIGSLKGTTR) are compositionally biased toward polar residues.

Belongs to the DyP-type peroxidase family. As to quaternary structure, found in a complex with type 1 encapsulin, strongly suggesting it is found in a type 1 encapsulin nanocompartment. Homotetramer, presumably also in the type 1 encapsulin nanocompartment. Heme b is required as a cofactor.

It is found in the encapsulin nanocompartment. The protein resides in the cell membrane. The catalysed reaction is 2 a phenolic donor + H2O2 = 2 a phenolic radical donor + 2 H2O. Functionally, cargo protein of a type 1 encapsulin nanocompartment. A heme-dependent peroxidase. This cargo-loaded encapsulin nanocompartment is probably involved in protection against oxidative damage. The chain is Dye-decolorizing peroxidase from Mycolicibacterium paratuberculosis (strain ATCC BAA-968 / K-10) (Mycobacterium paratuberculosis).